The following is a 151-amino-acid chain: Deoxyuridine 5'-triphosphate nucleotidohydrolase (151 aa).

Substrate contacts are provided by residues 70 to 72 (RSG), Asn83, 87 to 89 (LID), and Met97.

Belongs to the dUTPase family. It depends on Mg(2+) as a cofactor.

It carries out the reaction dUTP + H2O = dUMP + diphosphate + H(+). Its pathway is pyrimidine metabolism; dUMP biosynthesis; dUMP from dCTP (dUTP route): step 2/2. In terms of biological role, this enzyme is involved in nucleotide metabolism: it produces dUMP, the immediate precursor of thymidine nucleotides and it decreases the intracellular concentration of dUTP so that uracil cannot be incorporated into DNA. The polypeptide is Deoxyuridine 5'-triphosphate nucleotidohydrolase (Tolumonas auensis (strain DSM 9187 / NBRC 110442 / TA 4)).